Here is a 270-residue protein sequence, read N- to C-terminus: Elongation factor Ts (270 aa).

The segment at 75–78 is involved in Mg(2+) ion dislocation from EF-Tu; the sequence is TDFV.

The protein belongs to the EF-Ts family.

Its subcellular location is the cytoplasm. Functionally, associates with the EF-Tu.GDP complex and induces the exchange of GDP to GTP. It remains bound to the aminoacyl-tRNA.EF-Tu.GTP complex up to the GTP hydrolysis stage on the ribosome. This Cutibacterium acnes (strain DSM 16379 / KPA171202) (Propionibacterium acnes) protein is Elongation factor Ts.